Consider the following 479-residue polypeptide: Aryl-phospho-beta-D-glucosidase BglA (479 aa).

Glutamate 176 functions as the Proton donor in the catalytic mechanism. Glutamate 377 acts as the Nucleophile in catalysis.

This sequence belongs to the glycosyl hydrolase 1 family.

The catalysed reaction is 6-phospho-beta-D-glucosyl-(1-&gt;4)-D-glucose + H2O = D-glucose 6-phosphate + D-glucose. Catalyzes the hydrolysis of aryl-phospho-beta-D-glucosides such as 4-methylumbelliferyl-phospho-beta-D-glucopyranoside (MUG-P), phosphoarbutin and phosphosalicin. Plays a major role in the utilization of arbutin or salicin as the sole carbon source. BglA and BglH are the major proteins contributing to hydrolysis of MUG-P by extracts of late-exponential-phase or stationary-phase B.subtilis cells. This Bacillus subtilis (strain 168) protein is Aryl-phospho-beta-D-glucosidase BglA (bglA).